Reading from the N-terminus, the 243-residue chain is Probable transcriptional regulatory protein BAV2207 (243 aa).

A disordered region spans residues 1–21; the sequence is MAGHSKWANIQHRKGRQDAKR.

Belongs to the TACO1 family.

The protein localises to the cytoplasm. In Bordetella avium (strain 197N), this protein is Probable transcriptional regulatory protein BAV2207.